Here is a 446-residue protein sequence, read N- to C-terminus: 5-hydroxytryptamine receptor (446 aa).

Residues 1-65 lie on the Extracellular side of the membrane; sequence MEGAEGQEEL…AALVRAAAKA (65 aa). N23, N27, N36, and N42 each carry an N-linked (GlcNAc...) asparagine glycan. The chain crosses the membrane as a helical span at residues 66–88; sequence VVLGLLILATVVGNVFVIAAILL. Residues 89 to 98 lie on the Cytoplasmic side of the membrane; sequence ERHLRSAANN. Residues 99 to 120 traverse the membrane as a helical segment; it reads LILSLAVADLLVACLVMPLGAV. Residues 121–135 are Extracellular-facing; that stretch reads YEVVQRWTLGPELCD. C134 and C214 form a disulfide bridge. Residues 136-157 form a helical membrane-spanning segment; sequence MWTSGDVLCCTASILHLVAIAL. Residues 158–176 are Cytoplasmic-facing; the sequence is DRYWAVTNIDYIHASTAKR. Residues 177–199 form a helical membrane-spanning segment; it reads VGMMIACVWTVSFFVCIAQLLGW. Residues 200–227 are Extracellular-facing; it reads KDPDWNQRVSEDLRCVVSQDVGYQIFAT. A helical transmembrane segment spans residues 228–249; the sequence is ASSFYVPVLIILILYWRIYQTA. Residues 250–367 lie on the Cytoplasmic side of the membrane; sequence RKRIRRRRGA…SKRERKAAKT (118 aa). Residues 304–324 are compositionally biased toward polar residues; it reads TTTGFTNVSSNNTSPEKQSCA. A disordered region spans residues 304-329; sequence TTTGFTNVSSNNTSPEKQSCANGLEA. A helical transmembrane segment spans residues 368-391; sequence LAIITGAFVACWLPFFVLAILVPT. At 392–399 the chain is on the extracellular side; it reads CDCEVSPV. The helical transmembrane segment at 400 to 422 threads the bilayer; sequence LTSLSLWLGYFNSTLNPVIYTVF. Residues 423 to 446 lie on the Cytoplasmic side of the membrane; the sequence is SPEFRHAFQRLLCGRRVRRRRAPQ.

Belongs to the G-protein coupled receptor 1 family.

The protein resides in the cell membrane. Its function is as follows. This is a receptor for 5-hydroxytryptamine (serotonin), a biogenic hormone that function as a neurotransmitter, a hormone, and a mitogen. This chain is 5-hydroxytryptamine receptor, found in Bombyx mori (Silk moth).